Consider the following 496-residue polypeptide: Guanosine-5'-triphosphate,3'-diphosphate pyrophosphatase (496 aa).

Belongs to the GppA/Ppx family. GppA subfamily.

The catalysed reaction is guanosine 3'-diphosphate 5'-triphosphate + H2O = guanosine 3',5'-bis(diphosphate) + phosphate + H(+). It participates in purine metabolism; ppGpp biosynthesis; ppGpp from GTP: step 2/2. Catalyzes the conversion of pppGpp to ppGpp. Guanosine pentaphosphate (pppGpp) is a cytoplasmic signaling molecule which together with ppGpp controls the 'stringent response', an adaptive process that allows bacteria to respond to amino acid starvation, resulting in the coordinated regulation of numerous cellular activities. The chain is Guanosine-5'-triphosphate,3'-diphosphate pyrophosphatase from Aeromonas hydrophila subsp. hydrophila (strain ATCC 7966 / DSM 30187 / BCRC 13018 / CCUG 14551 / JCM 1027 / KCTC 2358 / NCIMB 9240 / NCTC 8049).